Here is a 452-residue protein sequence, read N- to C-terminus: Maltoporin (452 aa).

Residues 1-25 form the signal peptide; the sequence is MMITLRKLPLAVAVAAGVMSAQAMA.

It belongs to the porin LamB (TC 1.B.3) family. As to quaternary structure, homotrimer formed of three 18-stranded antiparallel beta-barrels, containing three independent channels.

Its subcellular location is the cell outer membrane. The enzyme catalyses beta-maltose(in) = beta-maltose(out). In terms of biological role, involved in the transport of maltose and maltodextrins. The chain is Maltoporin from Salmonella heidelberg (strain SL476).